A 244-amino-acid chain; its full sequence is ATP synthase subunit a (244 aa).

7 helical membrane-spanning segments follow: residues Phe20–Ile40, Gly81–Met101, Gln113–Phe133, Phe140–Ile160, Leu176–Tyr196, Phe202–Ala222, and Phe223–Leu243.

The protein belongs to the ATPase A chain family. As to quaternary structure, F-type ATPases have 2 components, CF(1) - the catalytic core - and CF(0) - the membrane proton channel. CF(1) has five subunits: alpha(3), beta(3), gamma(1), delta(1), epsilon(1). CF(0) has three main subunits: a, b and c.

It is found in the mitochondrion inner membrane. In terms of biological role, mitochondrial membrane ATP synthase (F(1)F(0) ATP synthase or Complex V) produces ATP from ADP in the presence of a proton gradient across the membrane which is generated by electron transport complexes of the respiratory chain. F-type ATPases consist of two structural domains, F(1) - containing the extramembraneous catalytic core and F(0) - containing the membrane proton channel, linked together by a central stalk and a peripheral stalk. During catalysis, ATP synthesis in the catalytic domain of F(1) is coupled via a rotary mechanism of the central stalk subunits to proton translocation. Key component of the proton channel; it may play a direct role in the translocation of protons across the membrane. The protein is ATP synthase subunit a (atp6) of Dictyostelium discoideum (Social amoeba).